Reading from the N-terminus, the 530-residue chain is Autoinducer-2 kinase (530 aa).

Belongs to the FGGY kinase family.

The protein localises to the cytoplasm. It catalyses the reaction (S)-4,5-dihydroxypentane-2,3-dione + ATP = (2S)-2-hydroxy-3,4-dioxopentyl phosphate + ADP + H(+). Functionally, catalyzes the phosphorylation of autoinducer-2 (AI-2) to phospho-AI-2, which subsequently inactivates the transcriptional regulator LsrR and leads to the transcription of the lsr operon. Phosphorylates the ring-open form of (S)-4,5-dihydroxypentane-2,3-dione (DPD), which is the precursor to all AI-2 signaling molecules, at the C5 position. The protein is Autoinducer-2 kinase of Escherichia coli O9:H4 (strain HS).